The following is a 476-amino-acid chain: Bifunctional protein HldE (476 aa).

A ribokinase region spans residues 1-318; sequence MAQYSAEFKQ…ENAIHARPET (318 aa). An ATP-binding site is contributed by 195 to 198; sequence NMSE. Residue Asp264 is part of the active site. Residues 344–476 form a cytidylyltransferase region; the sequence is MTNGCFDILH…VIEKIKLLKD (133 aa).

In the N-terminal section; belongs to the carbohydrate kinase PfkB family. The protein in the C-terminal section; belongs to the cytidylyltransferase family. In terms of assembly, homodimer.

It carries out the reaction D-glycero-beta-D-manno-heptose 7-phosphate + ATP = D-glycero-beta-D-manno-heptose 1,7-bisphosphate + ADP + H(+). The enzyme catalyses D-glycero-beta-D-manno-heptose 1-phosphate + ATP + H(+) = ADP-D-glycero-beta-D-manno-heptose + diphosphate. Its pathway is nucleotide-sugar biosynthesis; ADP-L-glycero-beta-D-manno-heptose biosynthesis; ADP-L-glycero-beta-D-manno-heptose from D-glycero-beta-D-manno-heptose 7-phosphate: step 1/4. It participates in nucleotide-sugar biosynthesis; ADP-L-glycero-beta-D-manno-heptose biosynthesis; ADP-L-glycero-beta-D-manno-heptose from D-glycero-beta-D-manno-heptose 7-phosphate: step 3/4. The protein operates within bacterial outer membrane biogenesis; LOS core biosynthesis. Functionally, catalyzes the phosphorylation of D-glycero-D-manno-heptose 7-phosphate at the C-1 position to selectively form D-glycero-beta-D-manno-heptose-1,7-bisphosphate. Its function is as follows. Catalyzes the ADP transfer from ATP to D-glycero-beta-D-manno-heptose 1-phosphate, yielding ADP-D-glycero-beta-D-manno-heptose. This is Bifunctional protein HldE from Haemophilus influenzae (strain ATCC 51907 / DSM 11121 / KW20 / Rd).